Reading from the N-terminus, the 209-residue chain is Urease accessory protein UreG (209 aa).

Residue 18–25 (GPVGSGKT) participates in GTP binding.

This sequence belongs to the SIMIBI class G3E GTPase family. UreG subfamily. Homodimer. UreD, UreF and UreG form a complex that acts as a GTP-hydrolysis-dependent molecular chaperone, activating the urease apoprotein by helping to assemble the nickel containing metallocenter of UreC. The UreE protein probably delivers the nickel.

The protein resides in the cytoplasm. Facilitates the functional incorporation of the urease nickel metallocenter. This process requires GTP hydrolysis, probably effectuated by UreG. The protein is Urease accessory protein UreG of Cupriavidus pinatubonensis (strain JMP 134 / LMG 1197) (Cupriavidus necator (strain JMP 134)).